We begin with the raw amino-acid sequence, 151 residues long: Small ribosomal subunit protein uS15 (151 aa).

This sequence belongs to the universal ribosomal protein uS15 family. In terms of assembly, component of the small ribosomal subunit.

It localises to the cytoplasm. Component of the small ribosomal subunit. The ribosome is a large ribonucleoprotein complex responsible for the synthesis of proteins in the cell. This chain is Small ribosomal subunit protein uS15 (rps13), found in Xenopus laevis (African clawed frog).